Consider the following 245-residue polypeptide: Protein virB1 (245 aa).

Residues 1–28 (MLKATGPLSIILLASTCPSSGAAPLSFA) form the signal peptide. Residues 176–245 (LVPPLTARPK…LFDLNQGGPQ (70 aa)) are disordered. Over residues 183–193 (RPKDDREKPGS) the composition is skewed to basic and acidic residues.

It belongs to the virb1 family.

Functionally, virB proteins are suggested to act at the bacterial surface and there play an important role in directing T-DNA transfer to plant cells. This Agrobacterium fabrum (strain C58 / ATCC 33970) (Agrobacterium tumefaciens (strain C58)) protein is Protein virB1 (virB1).